The sequence spans 414 residues: DNA polymerase IV 1 (414 aa).

The 182-residue stretch at 8–189 (IFHIDMNSFY…LPVGEMHGVG (182 aa)) folds into the UmuC domain. The Mg(2+) site is built by Asp12 and Asp108. Glu109 is a catalytic residue. The interval 391 to 414 (LKKEESKTKGTSFNKDFFQDEKKS) is disordered.

The protein belongs to the DNA polymerase type-Y family. In terms of assembly, monomer. Mg(2+) serves as cofactor.

It localises to the cytoplasm. The enzyme catalyses DNA(n) + a 2'-deoxyribonucleoside 5'-triphosphate = DNA(n+1) + diphosphate. Its function is as follows. Poorly processive, error-prone DNA polymerase involved in untargeted mutagenesis. Copies undamaged DNA at stalled replication forks, which arise in vivo from mismatched or misaligned primer ends. These misaligned primers can be extended by PolIV. Exhibits no 3'-5' exonuclease (proofreading) activity. May be involved in translesion synthesis (TSL), in conjunction with the beta clamp from PolIII. In Bacillus subtilis (strain 168), this protein is DNA polymerase IV 1 (dinB1).